A 1086-amino-acid polypeptide reads, in one-letter code: NAD(P) transhydrogenase, mitochondrial (1086 aa).

The N-terminal 43 residues, 1–43, are a transit peptide targeting the mitochondrion; sequence MANLLKTVVTGCSCPFLSNLGSCKVLPGKKNFLRTFHTHRILW. Over 44–474 the chain is Mitochondrial matrix; it reads CSAPVKPGIP…TITPFRKTMT (431 aa). Residue K70 is modified to N6-acetyllysine. At K117 the chain carries N6-succinyllysine. 182–184 provides a ligand contact to NAD(+); that stretch reads RVT. The residue at position 224 (K224) is an N6-succinyllysine. NAD(+) contacts are provided by residues V237, 257 to 259, and G287; that span reads DTR. K294 bears the N6-succinyllysine mark. Positions 300 and 319 each coordinate NAD(+). K331 carries the N6-succinyllysine modification. K397 carries the post-translational modification N6-acetyllysine. 4 consecutive transmembrane segments (helical) span residues 475–493, 501–521, 527–546, and 558–578; these read SASV…GIAA, MVTT…GVTP, LMSV…LVLM, and GLAA…FLVT. Topologically, residues 579–595 are mitochondrial matrix; sequence QRMLDMFKRPTDPPEYN. The next 5 helical transmembrane spans lie at 596–616, 622–642, 646–666, 672–691, and 702–722; these read YLYL…LYSG, IMYL…STQG, LGNA…LGGL, LLAQ…LTIA, and LVAA…IAEY. Topologically, residues 723-739 are cytoplasmic; sequence IIEYPHFATDAAANLTK. Transmembrane regions (helical) follow at residues 740 to 760, 778 to 797, 801 to 819, 833 to 853, and 857 to 879; these read IVAY…LVAY, HLLN…PFMM, FTTG…AVMG, VVIT…GFLL, and LLTI…MCVA. At 880–1086 the chain is on the mitochondrial matrix side; it reads MNRSLANVIL…QAKVRESYQK (207 aa). NADP(+) is bound by residues Y933, 965 to 970, 1009 to 1011, 1026 to 1027, 1042 to 1049, and 1068 to 1069; these read VAGRMP, NDT, GM, KRSLGVGY, and DA. Residue K1079 is modified to N6-succinyllysine.

The protein in the N-terminal section; belongs to the AlaDH/PNT family. This sequence in the C-terminal section; belongs to the PNT beta subunit family. Homodimer.

It localises to the mitochondrion inner membrane. The catalysed reaction is NAD(+) + NADPH + H(+)(in) = NADH + NADP(+) + H(+)(out). Its function is as follows. The transhydrogenation between NADH and NADP is coupled to respiration and ATP hydrolysis and functions as a proton pump across the membrane. May play a role in reactive oxygen species (ROS) detoxification in the adrenal gland. The chain is NAD(P) transhydrogenase, mitochondrial (NNT) from Bos taurus (Bovine).